The chain runs to 284 residues: uncharacterized protein (284 aa).

The Cytoplasmic portion of the chain corresponds to 1–8 (MLWKVSKM). A helical transmembrane segment spans residues 9-25 (FLGGLVALTTISVATLY). Topologically, residues 26–80 (HYQNRLVYPSWAQGARNHVDTPDSRGIPYEKLTLITQDHIKLEAWDIKNENSTST) are extracellular. The helical transmembrane segment at 81–101 (VLILCPNAGNIGYFILIIDIF) threads the bilayer. Topologically, residues 102–284 (YRQFGMSVFI…RDFLIEKGFI (183 aa)) are cytoplasmic.

It to S.pombe bem46 and M.tuberculosis Rv2307c.

The protein localises to the mitochondrion membrane. This is an uncharacterized protein from Saccharomyces cerevisiae (strain ATCC 204508 / S288c) (Baker's yeast).